The primary structure comprises 286 residues: Phosphoribosylaminoimidazole-succinocarboxamide synthase (286 aa).

The protein belongs to the SAICAR synthetase family.

It carries out the reaction 5-amino-1-(5-phospho-D-ribosyl)imidazole-4-carboxylate + L-aspartate + ATP = (2S)-2-[5-amino-1-(5-phospho-beta-D-ribosyl)imidazole-4-carboxamido]succinate + ADP + phosphate + 2 H(+). It functions in the pathway purine metabolism; IMP biosynthesis via de novo pathway; 5-amino-1-(5-phospho-D-ribosyl)imidazole-4-carboxamide from 5-amino-1-(5-phospho-D-ribosyl)imidazole-4-carboxylate: step 1/2. The polypeptide is Phosphoribosylaminoimidazole-succinocarboxamide synthase (Histophilus somni (strain 2336) (Haemophilus somnus)).